Reading from the N-terminus, the 384-residue chain is 8-amino-7-oxononanoate synthase (384 aa).

Arg-21 is a binding site for substrate. 108 to 109 (GF) is a binding site for pyridoxal 5'-phosphate. Residue His-133 participates in substrate binding. Residues Ser-179, His-207, and Thr-233 each contribute to the pyridoxal 5'-phosphate site. At Lys-236 the chain carries N6-(pyridoxal phosphate)lysine. Position 352 (Thr-352) interacts with substrate.

The protein belongs to the class-II pyridoxal-phosphate-dependent aminotransferase family. BioF subfamily. As to quaternary structure, homodimer. Requires pyridoxal 5'-phosphate as cofactor.

It carries out the reaction 6-carboxyhexanoyl-[ACP] + L-alanine + H(+) = (8S)-8-amino-7-oxononanoate + holo-[ACP] + CO2. It functions in the pathway cofactor biosynthesis; biotin biosynthesis. Catalyzes the decarboxylative condensation of pimeloyl-[acyl-carrier protein] and L-alanine to produce 8-amino-7-oxononanoate (AON), [acyl-carrier protein], and carbon dioxide. The chain is 8-amino-7-oxononanoate synthase from Escherichia coli O6:K15:H31 (strain 536 / UPEC).